The sequence spans 244 residues: 1-(5-phosphoribosyl)-5-[(5-phosphoribosylamino)methylideneamino] imidazole-4-carboxamide isomerase (244 aa).

D10 (proton acceptor) is an active-site residue. Catalysis depends on D129, which acts as the Proton donor.

This sequence belongs to the HisA/HisF family.

The protein resides in the cytoplasm. The catalysed reaction is 1-(5-phospho-beta-D-ribosyl)-5-[(5-phospho-beta-D-ribosylamino)methylideneamino]imidazole-4-carboxamide = 5-[(5-phospho-1-deoxy-D-ribulos-1-ylimino)methylamino]-1-(5-phospho-beta-D-ribosyl)imidazole-4-carboxamide. It functions in the pathway amino-acid biosynthesis; L-histidine biosynthesis; L-histidine from 5-phospho-alpha-D-ribose 1-diphosphate: step 4/9. The chain is 1-(5-phosphoribosyl)-5-[(5-phosphoribosylamino)methylideneamino] imidazole-4-carboxamide isomerase from Rhodococcus erythropolis (strain PR4 / NBRC 100887).